Here is a 538-residue protein sequence, read N- to C-terminus: CTP synthase (538 aa).

Positions 1–267 are amidoligase domain; the sequence is MDRAKFIFVT…LTPIARRFNL (267 aa). Ser-15 contacts CTP. Position 15 (Ser-15) interacts with UTP. Residues 16-21 and Asp-73 contribute to the ATP site; that span reads SLGKGI. The Mg(2+) site is built by Asp-73 and Glu-141. Residues 148 to 150, 188 to 193, and Lys-224 contribute to the CTP site; these read DME and KTKPTQ. UTP contacts are provided by residues 188–193 and Lys-224; that span reads KTKPTQ. One can recognise a Glutamine amidotransferase type-1 domain in the interval 292–538; sequence KIGFVGKYLS…DFIKSALSKS (247 aa). Residue Gly-351 participates in L-glutamine binding. Cys-378 functions as the Nucleophile; for glutamine hydrolysis in the catalytic mechanism. Residues 379–382, Glu-402, and Arg-469 each bind L-glutamine; that span reads LGMQ. Active-site residues include His-513 and Glu-515.

Belongs to the CTP synthase family. In terms of assembly, homotetramer.

It carries out the reaction UTP + L-glutamine + ATP + H2O = CTP + L-glutamate + ADP + phosphate + 2 H(+). The catalysed reaction is L-glutamine + H2O = L-glutamate + NH4(+). It catalyses the reaction UTP + NH4(+) + ATP = CTP + ADP + phosphate + 2 H(+). It functions in the pathway pyrimidine metabolism; CTP biosynthesis via de novo pathway; CTP from UDP: step 2/2. With respect to regulation, allosterically activated by GTP, when glutamine is the substrate; GTP has no effect on the reaction when ammonia is the substrate. The allosteric effector GTP functions by stabilizing the protein conformation that binds the tetrahedral intermediate(s) formed during glutamine hydrolysis. Inhibited by the product CTP, via allosteric rather than competitive inhibition. Functionally, catalyzes the ATP-dependent amination of UTP to CTP with either L-glutamine or ammonia as the source of nitrogen. Regulates intracellular CTP levels through interactions with the four ribonucleotide triphosphates. In Helicobacter pylori (strain HPAG1), this protein is CTP synthase.